The chain runs to 1060 residues: METLKEEEQFRNFDTPLLNTPHHLKEETQIQQKEREQQQQQQQQLQQQLQLQNERENRNHNITEELNKIPSSNNSSNSSSPNPLSISVSSSLGSASSIHLTPQGTIGNYLVIKTIGRGQFGKVKLGYHKKIPNEKVAIKIINKGKLDPETLKMVQREVRIMKLLHHPNIIRLYEVIETSRALYLIMEYAGEGEVMDFMIAHGVLTESQARTFFTQIVSAINYCHSKRAVHRDLKPENLLLDCNRQIKIIDFGLSNVFTPGSYLKTFCGSPTYASPELILRKEYNGPSVDVWSMGVVLFVLVTGYLPFDGDNYVELFQKILAGNYTIPSYLTHECKSLISRMLVVDPDKRATMEEIINHPWLSSTKQIILSTTMTDSLKNLNSCLEQQINVENLLNQSLNNSNNNNINNINNINNTMATMNNSNNNNNNNNNNNNNNNNNNNNNNNNNNNNNNNNNNNNNNNNNNTTTTTNATTTTPITSPIQNRNNEELDQEIIEELVGLGFEREELCNSIRQNKYNDAASTYFLLQGKKLRESQQNQTDNAKKLEKFYSEPLTIPAHVGENSPLIKYKRHHKRSNTVDSPKSTNTPQYRSSNTQQNNHHHQQQQQQQQQQQQQHHHHTQQQNQQQSQQQYNNNNHNKPPTPTIVTTQASTTVNNHISINNNNNNNNNNNNNNNSSTPGSNTVSSTQSSSINSSVNPSPLCLSNAVPVSLREKLREKEATTTNTTTTTTTTTTTTTNTSSNNSSNQSISSISPPTSTSPNLQPFSLASTANNNNNNNNSNNNSNNNNNNNNNNNNSLNSHIQRRATASSLQQQQQMQQASNTRRLRSNSSSVADQSQRQESRKLEDDWVIFEDYSNDGHRDGQPKNYHLQPSSLSSHKKQKSPVHSFLSSFKNILKRSDDKSFNSSSSNNNTNNNNTTTSVSTNNTPRTLEVDHQNSNNNNQQATSSSPNVTSPSSPSQQQQQEPRIVRFVFGVNTTTMKDAPELMQQVLKVVDTFCIPHTKKAPFLIECETEGVRFSIEICRLPRLSVNGLKFKRIGGSSWRYKSICKDLLSQMKLNSH.

Basic and acidic residues-rich tracts occupy residues 1–11 (METLKEEEQFR) and 23–37 (HLKE…EREQ). 2 disordered regions span residues 1–52 (METL…LQLQ) and 67–88 (NKIP…SISV). 2 stretches are compositionally biased toward low complexity: residues 38-52 (QQQQ…LQLQ) and 68-88 (KIPS…SISV). The 253-residue stretch at 109 to 361 (YLVIKTIGRG…MEEIINHPWL (253 aa)) folds into the Protein kinase domain. ATP contacts are provided by residues 115–123 (IGRGQFGKV) and K139. The active-site Proton acceptor is the D232. Over residues 409–475 (INNINNTMAT…TTTTNATTTT (67 aa)) the composition is skewed to low complexity. Disordered regions lie at residues 409–488 (INNI…NNEE), 560–701 (GENS…SPLC), 714–886 (LREK…PVHS), and 899–966 (DDKS…QEPR). In terms of domain architecture, UBA spans 488 to 528 (ELDQEIIEELVGLGFEREELCNSIRQNKYNDAASTYFLLQG). Residues 577-594 (TVDSPKSTNTPQYRSSNT) are compositionally biased toward polar residues. 4 stretches are compositionally biased toward low complexity: residues 603–613 (QQQQQQQQQQQ), 620–637 (QQQN…NNHN), 650–699 (STTV…NPSP), and 720–760 (TTTN…TSPN). The span at 761 to 770 (LQPFSLASTA) shows a compositional bias: polar residues. Low complexity-rich tracts occupy residues 771-799 (NNNN…SLNS) and 811-831 (QQQQ…NSSS). Residues 837–846 (QRQESRKLED) are compositionally biased toward basic and acidic residues. Composition is skewed to low complexity over residues 904–926 (NSSS…TNNT) and 935–965 (QNSN…QQEP). Positions 1008 to 1057 (IECETEGVRFSIEICRLPRLSVNGLKFKRIGGSSWRYKSICKDLLSQMKL) constitute a KA1 domain.

This sequence belongs to the protein kinase superfamily. CAMK Ser/Thr protein kinase family. SNF1 subfamily.

It catalyses the reaction L-seryl-[protein] + ATP = O-phospho-L-seryl-[protein] + ADP + H(+). The catalysed reaction is L-threonyl-[protein] + ATP = O-phospho-L-threonyl-[protein] + ADP + H(+). This is Probable serine/threonine-protein kinase MARK-A (mrkA) from Dictyostelium discoideum (Social amoeba).